We begin with the raw amino-acid sequence, 122 residues long: uncharacterized protein (122 aa).

This is an uncharacterized protein from Bacillus subtilis (strain 168).